The primary structure comprises 523 residues: Carboxypeptidase Y (523 aa).

The N-terminal stretch at 1 to 20 (MILHTYIILSLLTIFPKAIG) is a signal peptide. Positions 21–107 (LSLQMPMALE…QELPNYRLRV (87 aa)) are excised as a propeptide. 5 disulfides stabilise this stretch: Cys-162–Cys-401, Cys-296–Cys-310, Cys-320–Cys-343, Cys-327–Cys-336, and Cys-365–Cys-371. Residue Asn-193 is glycosylated (N-linked (GlcNAc...) asparagine). Residue Ser-249 is part of the active site. Asn-271 carries an N-linked (GlcNAc...) asparagine glycan. Asp-441 is a catalytic residue. 2 N-linked (GlcNAc...) asparagine glycosylation sites follow: Asn-484 and Asn-487. His-498 is an active-site residue.

Belongs to the peptidase S10 family.

It localises to the vacuole. It carries out the reaction Release of a C-terminal amino acid with broad specificity.. Functionally, involved in degradation of small peptides. This is Carboxypeptidase Y (PRC1) from Komagataella phaffii (strain GS115 / ATCC 20864) (Yeast).